We begin with the raw amino-acid sequence, 148 residues long: Arginine repressor (148 aa).

This sequence belongs to the ArgR family.

The protein resides in the cytoplasm. It functions in the pathway amino-acid biosynthesis; L-arginine biosynthesis [regulation]. Its function is as follows. Regulates arginine biosynthesis genes. This chain is Arginine repressor, found in Chlorobium limicola (strain DSM 245 / NBRC 103803 / 6330).